The following is a 338-amino-acid chain: tRNA N6-adenosine threonylcarbamoyltransferase (338 aa).

The Fe cation site is built by His111 and His115. Substrate is bound by residues 134–138, Asp167, Gly180, and Asn272; that span reads LVSGG. Asp300 provides a ligand contact to Fe cation.

Belongs to the KAE1 / TsaD family. Fe(2+) is required as a cofactor.

The protein resides in the cytoplasm. It carries out the reaction L-threonylcarbamoyladenylate + adenosine(37) in tRNA = N(6)-L-threonylcarbamoyladenosine(37) in tRNA + AMP + H(+). Its function is as follows. Required for the formation of a threonylcarbamoyl group on adenosine at position 37 (t(6)A37) in tRNAs that read codons beginning with adenine. Is involved in the transfer of the threonylcarbamoyl moiety of threonylcarbamoyl-AMP (TC-AMP) to the N6 group of A37, together with TsaE and TsaB. TsaD likely plays a direct catalytic role in this reaction. The chain is tRNA N6-adenosine threonylcarbamoyltransferase from Shewanella baltica (strain OS223).